A 423-amino-acid polypeptide reads, in one-letter code: Gamma-glutamyl phosphate reductase 2 (423 aa).

It belongs to the gamma-glutamyl phosphate reductase family.

Its subcellular location is the cytoplasm. The enzyme catalyses L-glutamate 5-semialdehyde + phosphate + NADP(+) = L-glutamyl 5-phosphate + NADPH + H(+). It participates in amino-acid biosynthesis; L-proline biosynthesis; L-glutamate 5-semialdehyde from L-glutamate: step 2/2. Functionally, catalyzes the NADPH-dependent reduction of L-glutamate 5-phosphate into L-glutamate 5-semialdehyde and phosphate. The product spontaneously undergoes cyclization to form 1-pyrroline-5-carboxylate. The sequence is that of Gamma-glutamyl phosphate reductase 2 from Bacillus licheniformis (strain ATCC 14580 / DSM 13 / JCM 2505 / CCUG 7422 / NBRC 12200 / NCIMB 9375 / NCTC 10341 / NRRL NRS-1264 / Gibson 46).